Here is a 428-residue protein sequence, read N- to C-terminus: MEILKDYLLHICFILFPILLYQVFWLGKPAILVPKINSGLVTLFACGASVLCIIFPIHEMDYIQYGLQMIPVIICLFYISTASGLTVAASVLCFELLFYEPSAMFVFTLLPFLIIIPILFQKKWPFMSKAKKLLLSLLISCVEIFLFFASSWILSALNILNFQKSGIFVYEAAVSGLFRSSVLLLSIYIIESIAENIALRSQLIHSEKMTIVSELAASVAHEVRNPLTVVRGFVQLLFNDETLQNKSSADYKKLVLSELDRAQGIITNYLDMAKQQLYEKEVFDLSALIKETSSLMVSYANYKSVTVEAETEPDLLIYGDATKLKQAVINLMKNSIEAVPHGKGMIHISAKRNGHTIMINITDNGVGMTDHQMQKLGEPYYSLKTNGTGLGLTVTFSIIEHHHGTISFNSSFQKGTTVTIKLPADLPH.

At 1-6 (MEILKD) the chain is on the cytoplasmic side. Residues 7 to 27 (YLLHICFILFPILLYQVFWLG) traverse the membrane as a helical segment. Topologically, residues 28–37 (KPAILVPKIN) are extracellular. The chain crosses the membrane as a helical span at residues 38–58 (SGLVTLFACGASVLCIIFPIH). Topologically, residues 59–68 (EMDYIQYGLQ) are cytoplasmic. The chain crosses the membrane as a helical span at residues 69–89 (MIPVIICLFYISTASGLTVAA). Over 90–99 (SVLCFELLFY) the chain is Extracellular. A helical transmembrane segment spans residues 100 to 120 (EPSAMFVFTLLPFLIIIPILF). The Cytoplasmic portion of the chain corresponds to 121–132 (QKKWPFMSKAKK). A helical transmembrane segment spans residues 133–153 (LLLSLLISCVEIFLFFASSWI). The Extracellular portion of the chain corresponds to 154-166 (LSALNILNFQKSG). Residues 167–187 (IFVYEAAVSGLFRSSVLLLSI) form a helical membrane-spanning segment. Residues 188-428 (YIIESIAENI…TIKLPADLPH (241 aa)) are Cytoplasmic-facing. The Histidine kinase domain occupies 218–426 (SVAHEVRNPL…TVTIKLPADL (209 aa)). His221 carries the post-translational modification Phosphohistidine; by autocatalysis.

It is found in the cell membrane. The enzyme catalyses ATP + protein L-histidine = ADP + protein N-phospho-L-histidine.. In terms of biological role, phosphorylates the sporulation-regulatory proteins spo0A and spo0F. Spo0F is required for the KinB activity. The protein is Sporulation kinase B (kinB) of Bacillus subtilis (strain 168).